A 469-amino-acid polypeptide reads, in one-letter code: IME2-dependent-signaling protein (469 aa).

Position 1 is an N-acetylmethionine (Met-1). Thr-13 is modified (phosphothreonine). 3 disordered regions span residues Lys-22–Met-55, Ala-67–Gln-92, and Asp-117–Thr-143. Ser-23, Ser-27, and Ser-39 each carry phosphoserine. Polar residues-rich tracts occupy residues Ser-25–Gly-42 and Ala-67–Gln-82. A phosphoserine mark is found at Ser-122, Ser-130, Ser-136, Ser-147, and Ser-148.

In terms of biological role, seems to act indirectly to modify IME2 activity, thus permitting IME2 to carry out later meiotic functions. The chain is IME2-dependent-signaling protein (IDS2) from Saccharomyces cerevisiae (strain ATCC 204508 / S288c) (Baker's yeast).